The primary structure comprises 360 residues: MMAGCGEIDHSINMLPTNRKANESCSNTAPSLTVPECAICLQTCVHPVSLPCKHVFCYLCVKGASWLGKRCALCRQEIPEDFLDKPTLLSPEELKAASRGNGEYAWYYEGRNGWWQYDERTSRELEDAFSKGKKNTEMLIAGFLYVADLENMVQYRRNEHGRRRKIKRDIIDIPKKGVAGLRLDCDANTVNLARESSADGADSVSAQSGASVQPLVSSVRPLTSVDGQLTSPATPSPDASTSLEDSFAHLQLSGDSIAERSHRGEGEEDHESPSSGRVPAPDTSIEETESDASSDSENVSSAVVAQHSLTQQRLLVSNANQTVSDRSDQSGTDRSVAGGGTVSVSVRSRRPDGQCTVTEV.

The segment at 37–75 (CAICLQTCVHPVSLPCKHVFCYLCVKGASWLGKRCALCR) adopts an RING-type zinc-finger fold. Glycyl lysine isopeptide (Lys-Gly) (interchain with G-Cter in ubiquitin) cross-links involve residues Lys85 and Lys95. The region spanning 92–168 (EELKAASRGN…EHGRRRKIKR (77 aa)) is the WWE domain. Residues Tyr108, Arg111, and Trp115 each coordinate a glycoprotein. Lys131 is covalently cross-linked (Glycyl lysine isopeptide (Lys-Gly) (interchain with G-Cter in ubiquitin)). A glycoprotein-binding residues include Tyr145, Gln154, Arg164, and Lys176. Lys176 participates in a covalent cross-link: Glycyl lysine isopeptide (Lys-Gly) (interchain with G-Cter in ubiquitin). Residues 259–360 (ERSHRGEGEE…PDGQCTVTEV (102 aa)) form a disordered region. Over residues 284-294 (SIEETESDASS) the composition is skewed to acidic residues. 2 positions are modified to phosphoserine: Ser290 and Ser294. Over residues 295 to 305 (DSENVSSAVVA) the composition is skewed to low complexity. Residues 307 to 333 (HSLTQQRLLVSNANQTVSDRSDQSGTD) are compositionally biased toward polar residues.

Can form homooligomers. Interacts with PARsylated AXIN1, AXIN2, BLZF1, CASC3, H1-2, IPO7, LIG3, NCL, PARP1, XRCC1, XRCC5 and XRCC6. Interacts with DDB1, DHX15, IQGAP1, LRPPRC, PARP2, PRKDC, RUVBL2, TNKS1 and TNKS2. Binding often leads to interactor ubiquitination, in the presence of the appropriate E1 and E2 enzymes, and proteasomal degradation. Post-translationally, ubiquitinated; autoubiquitinated. Autoubiquitination is enhanced upon poly(ADP-ribose)-binding.

The protein localises to the cytoplasm. It is found in the cytosol. The protein resides in the nucleus. The enzyme catalyses S-ubiquitinyl-[E2 ubiquitin-conjugating enzyme]-L-cysteine + [acceptor protein]-L-lysine = [E2 ubiquitin-conjugating enzyme]-L-cysteine + N(6)-ubiquitinyl-[acceptor protein]-L-lysine.. It participates in protein modification; protein ubiquitination. Functionally, E3 ubiquitin-protein ligase that specifically binds poly-ADP-ribosylated (PARsylated) proteins and mediates their ubiquitination and subsequent degradation. May regulate many important biological processes, such as cell survival and DNA damage response. Acts as an activator of the Wnt signaling pathway by mediating the ubiquitination of PARsylated AXIN1 and AXIN2, 2 key components of the beta-catenin destruction complex. Acts in cooperation with tankyrase proteins (TNKS and TNKS2), which mediate PARsylation of target proteins AXIN1, AXIN2, BLZF1, CASC3, TNKS and TNKS2. Recognizes and binds tankyrase-dependent PARsylated proteins via its WWE domain and mediates their ubiquitination, leading to their degradation. Different ubiquitin linkage types have been observed: TNKS2 undergoes ubiquitination at 'Lys-48' and 'Lys-63', while AXIN1 is only ubiquitinated at 'Lys-48'. May regulate TNKS and TNKS2 subcellular location, preventing aggregation at a centrosomal location. Neuroprotective protein. Protects the brain against N-methyl-D-aspartate (NMDA) receptor-mediated glutamate excitotoxicity and ischemia, by interfering with PAR-induced cell death, called parthanatos. Prevents nuclear translocation of AIFM1 in a PAR-binding dependent manner. Does not affect PARP1 activation. Protects against cell death induced by DNA damaging agents, such as N-methyl-N-nitro-N-nitrosoguanidine (MNNG) and rescues cells from G1 arrest. Promotes cell survival after gamma-irradiation. Facilitates DNA repair. The sequence is that of E3 ubiquitin-protein ligase RNF146 (RNF146) from Macaca fascicularis (Crab-eating macaque).